The chain runs to 468 residues: Alcohol dehydrogenase (quinone), cytochrome c subunit (468 aa).

An N-terminal signal peptide occupies residues 1 to 23 (MINRLKVTFSAAAFSLLAGTALA). 3 consecutive Cytochrome c domains span residues 31–134 (ALVQ…MHGV), 178–293 (PEIA…KSLP), and 317–407 (TASV…RTSW). Residues cysteine 45, cysteine 48, histidine 49, cysteine 193, cysteine 196, histidine 197, cysteine 330, cysteine 333, and histidine 334 each coordinate heme c.

As to quaternary structure, the alcohol dehydrogenase multicomponent enzyme system is composed of a dehydrogenase subunit I (AdhA) and a cytochrome c subunit II (AdhB). The cofactor is heme c.

The protein resides in the cell membrane. It carries out the reaction ethanol + a ubiquinone = a ubiquinol + acetaldehyde. Cytochrome c component of the alcohol dehydrogenase multicomponent enzyme system which is involved in the production of acetic acid and in the ethanol oxidase respiratory chain. Quinohemoprotein alcohol dehydrogenase (ADH) catalyzes the oxidation of ethanol to acetaldehyde by transferring electrons to the ubiquinone embedded in the membrane phospholipids. The electrons transfer from ethanol to membranous ubiquinone occurs from pyrroloquinoline quinone (PQQ) to one heme c in subunit I (AdhA), and finally to two heme c in subunit II (AdhB). Besides ubiquinone reduction, ADH also has a ubiquinol (QH2) oxidation reaction which mediates electron transfer from ubiquinol to the non-energy generating bypass oxidase system. The electrons transfer occurs from ubiquinol (QH2) to the additional heme c within subunit II (AdhB). This chain is Alcohol dehydrogenase (quinone), cytochrome c subunit, found in Gluconacetobacter polyoxogenes (Acetobacter polyoxogenes).